Consider the following 127-residue polypeptide: HTH-type transcriptional regulator ImmR (127 aa).

Basic and acidic residues predominate over residues 1-12; that stretch reads MSLGKRLKEARQ. Positions 1 to 22 are disordered; that stretch reads MSLGKRLKEARQKAGYTQKEAA. An HTH cro/C1-type domain is found at 7 to 61; sequence LKEARQKAGYTQKEAAEKLNIGNNNLSNYERDYRDPDTDTLLKLSNLYNVSTDYL. The segment at residues 18–37 is a DNA-binding region (H-T-H motif); it reads QKEAAEKLNIGNNNLSNYER.

This Bacillus subtilis (strain 168) protein is HTH-type transcriptional regulator ImmR (immR).